A 322-amino-acid chain; its full sequence is Probable transposase for insertion sequence element ISA1214 (322 aa).

This sequence belongs to the transposase 11 family.

In terms of biological role, involved in the transposition of the insertion sequence ISA1214. The chain is Probable transposase for insertion sequence element ISA1214 from Archaeoglobus fulgidus (strain ATCC 49558 / DSM 4304 / JCM 9628 / NBRC 100126 / VC-16).